The sequence spans 212 residues: Adenylate kinase (212 aa).

Position 10-15 (10-15 (GAGKGT)) interacts with ATP. The interval 30-59 (AIGDIFRTIIKTSTSEAELINNYVRQGELI) is NMP. Residues Arg-36, 57 to 59 (ELI), 85 to 88 (GYPR), and Gln-92 contribute to the AMP site. An LID region spans residues 122–160 (GRYSCKNCGKIYNRYFLQPKTDNVCDVCGSSTFDYRKDD). Arg-123 provides a ligand contact to ATP. Residues Cys-126 and Cys-129 each coordinate Zn(2+). 132-133 (IY) serves as a coordination point for ATP. The Zn(2+) site is built by Cys-146 and Cys-149. The AMP site is built by Arg-157 and Arg-168. ATP is bound at residue Lys-196.

This sequence belongs to the adenylate kinase family. Monomer.

The protein localises to the cytoplasm. The enzyme catalyses AMP + ATP = 2 ADP. It participates in purine metabolism; AMP biosynthesis via salvage pathway; AMP from ADP: step 1/1. Its function is as follows. Catalyzes the reversible transfer of the terminal phosphate group between ATP and AMP. Plays an important role in cellular energy homeostasis and in adenine nucleotide metabolism. In Rickettsia peacockii (strain Rustic), this protein is Adenylate kinase.